A 296-amino-acid chain; its full sequence is MPEKEMKLVIVTGMSGAGKTVAIQSFEDLGYFTIDNIPPTLVPKFLQLLETTNDIDKLALVVDMRSRSFFAEIQNVLDQVENNLEIDFKILFLDAADKELVARYKETRRSHPLAADGRILDGIKLERELLAPLKNLSQNVVDTTDLTPRELRKTISEQFSDQSQQQSFRVEVMSFGFKYGLPLDADLVFDVRFLPNPYYQPELRNQTGLDKPVFDYVMNHEESTEFYQHLLNLIEPILPGYKKEGKSVLTIAVGCTGGQHRSVAFAQRLADDLAKNWPVNCSHRDKDRRKETVNRS.

Residue 13–20 participates in ATP binding; it reads GMSGAGKT. 63-66 contributes to the GTP binding site; the sequence is DMRS.

It belongs to the RapZ-like family.

Functionally, displays ATPase and GTPase activities. This Streptococcus gordonii (strain Challis / ATCC 35105 / BCRC 15272 / CH1 / DL1 / V288) protein is Nucleotide-binding protein SGO_0954.